We begin with the raw amino-acid sequence, 397 residues long: MSNVLAINAGSSSLKFQLIKMPEEQVIAKGLVERIGMPDAIFSVEADGEKDKKVTEIADHSVAVKMLLESLTSTGVIQSFDEIDAVGHRVVHGGEYFSDSVLITDEIIQQIEEISELAPLHNPANLTGIHAFKEILPEIPMVAVFDTAFHQSMPEASYMYSLPREYYEEYGIRKYGFHGTSHKYVSERAADLLGVPLSNLRLISCHIGNGASVTAIKDGESIDTSMGFTPLAGVTMGTRSGNIDPALIPYIMDKTGKTADEVLNVLNKESGMLALSGFSSDLRDIEEKSETDARAELALDVFAGRIHKYIGSYAAKMNGLDAIIFTAGVGENSVTIREKILTGLEFMGIYWDPKLNDVRGKEQFINYPHSPVKVIIIPTNEEAMIAKDTVRLSGLNS.

Asparagine 8 contributes to the Mg(2+) binding site. Lysine 15 is a binding site for ATP. Substrate is bound at residue arginine 89. Aspartate 146 (proton donor/acceptor) is an active-site residue. Residues 206–210, 281–283, and 328–332 each bind ATP; these read HIGNG, DLR, and GVGEN. Glutamate 381 contacts Mg(2+).

Belongs to the acetokinase family. As to quaternary structure, homodimer. Mg(2+) serves as cofactor. Mn(2+) is required as a cofactor.

It localises to the cytoplasm. The enzyme catalyses acetate + ATP = acetyl phosphate + ADP. It participates in metabolic intermediate biosynthesis; acetyl-CoA biosynthesis; acetyl-CoA from acetate: step 1/2. Functionally, catalyzes the formation of acetyl phosphate from acetate and ATP. Can also catalyze the reverse reaction. The sequence is that of Acetate kinase from Oceanobacillus iheyensis (strain DSM 14371 / CIP 107618 / JCM 11309 / KCTC 3954 / HTE831).